The chain runs to 176 residues: Natural cytotoxicity triggering receptor 3 (176 aa).

Positions 1-18 (MAWMLLLILIMVYPGSCA) are cleaved as a signal peptide. Residues 19–126 (LWVSQPPEIR…VGTGNGTRLV (108 aa)) enclose the Ig-like domain. The Extracellular segment spans residues 19 to 135 (LWVSQPPEIR…VVEKEYPQLG (117 aa)). Residues C39 and C108 are joined by a disulfide bond. N-linked (GlcNAc...) asparagine glycosylation is found at N42 and N121. Residues 136-156 (AGTVLLLRAGFYAVSFLSVAV) form a helical membrane-spanning segment. The Cytoplasmic segment spans residues 157 to 176 (GSTLYYQGKCHCHMGTHCHS).

The protein belongs to the natural cytotoxicity receptor (NCR) family. In terms of assembly, homodimer in the unliganted form. Interacts with CD3Z. Interacts with and is activated by binding to NCR3LG1. Interacts with and is activated by binding to BAG6. Interacts with and is inhibited by binding to LGALS3.

It is found in the cell membrane. Its function is as follows. Cell membrane receptor of natural killer/NK cells that is activated by binding of extracellular ligands including BAG6 and NCR3LG1. Stimulates NK cells cytotoxicity toward neighboring cells producing these ligands. It controls, for instance, NK cells cytotoxicity against tumor cells. Engagement of NCR3 by BAG6 also promotes myeloid dendritic cells (DC) maturation, both through killing DCs that did not acquire a mature phenotype, and inducing the release by NK cells of TNFA and IFNG that promote DC maturation. This Macaca fascicularis (Crab-eating macaque) protein is Natural cytotoxicity triggering receptor 3 (NCR3).